A 367-amino-acid polypeptide reads, in one-letter code: Quinolinate synthase (367 aa).

Iminosuccinate is bound by residues histidine 45 and serine 62. Cysteine 109 contributes to the [4Fe-4S] cluster binding site. Residues 140–142 and serine 161 each bind iminosuccinate; that span reads YVN. Position 229 (cysteine 229) interacts with [4Fe-4S] cluster. Iminosuccinate contacts are provided by residues 255-257 and threonine 272; that span reads HPE. Cysteine 319 lines the [4Fe-4S] cluster pocket.

Belongs to the quinolinate synthase family. Type 3 subfamily. [4Fe-4S] cluster is required as a cofactor.

The protein resides in the cytoplasm. The enzyme catalyses iminosuccinate + dihydroxyacetone phosphate = quinolinate + phosphate + 2 H2O + H(+). It participates in cofactor biosynthesis; NAD(+) biosynthesis; quinolinate from iminoaspartate: step 1/1. Its function is as follows. Catalyzes the condensation of iminoaspartate with dihydroxyacetone phosphate to form quinolinate. The polypeptide is Quinolinate synthase (Geobacillus thermodenitrificans (strain NG80-2)).